The primary structure comprises 229 residues: 7-cyano-7-deazaguanine synthase (229 aa).

ATP is bound at residue 9–19 (LSGGLDSTTVL). Residues Cys-192, Cys-202, Cys-205, and Cys-208 each coordinate Zn(2+).

Belongs to the QueC family. Zn(2+) serves as cofactor.

The enzyme catalyses 7-carboxy-7-deazaguanine + NH4(+) + ATP = 7-cyano-7-deazaguanine + ADP + phosphate + H2O + H(+). It functions in the pathway purine metabolism; 7-cyano-7-deazaguanine biosynthesis. Its function is as follows. Catalyzes the ATP-dependent conversion of 7-carboxy-7-deazaguanine (CDG) to 7-cyano-7-deazaguanine (preQ(0)). This is 7-cyano-7-deazaguanine synthase from Kineococcus radiotolerans (strain ATCC BAA-149 / DSM 14245 / SRS30216).